The sequence spans 189 residues: uncharacterized protein (189 aa).

The next 5 membrane-spanning stretches (helical) occupy residues 4–21, 34–56, 79–101, 122–144, and 148–170; these read AIST…FLFR, AFYP…PLIL, LLVI…LIYS, RILS…VLLN, and ILHV…NLLV.

The protein localises to the cell membrane. This is an uncharacterized protein from Archaeoglobus fulgidus (strain ATCC 49558 / DSM 4304 / JCM 9628 / NBRC 100126 / VC-16).